A 278-amino-acid polypeptide reads, in one-letter code: 3-methyl-2-oxobutanoate hydroxymethyltransferase (278 aa).

Positions 44 and 83 each coordinate Mg(2+). 3-methyl-2-oxobutanoate-binding positions include 44 to 45 (DS), Asp-83, and Lys-112. Glu-114 lines the Mg(2+) pocket. The active-site Proton acceptor is Glu-181.

The protein belongs to the PanB family. As to quaternary structure, homodecamer; pentamer of dimers. Requires Mg(2+) as cofactor.

It is found in the cytoplasm. The enzyme catalyses 3-methyl-2-oxobutanoate + (6R)-5,10-methylene-5,6,7,8-tetrahydrofolate + H2O = 2-dehydropantoate + (6S)-5,6,7,8-tetrahydrofolate. Its pathway is cofactor biosynthesis; (R)-pantothenate biosynthesis; (R)-pantoate from 3-methyl-2-oxobutanoate: step 1/2. Functionally, catalyzes the reversible reaction in which hydroxymethyl group from 5,10-methylenetetrahydrofolate is transferred onto alpha-ketoisovalerate to form ketopantoate. This Roseiflexus sp. (strain RS-1) protein is 3-methyl-2-oxobutanoate hydroxymethyltransferase.